The chain runs to 393 residues: Phosphoglycerate kinase (393 aa).

Substrate-binding positions include 22-24 (DFN), Arg-37, 60-63 (HLGR), Arg-119, and Arg-152. ATP-binding positions include Lys-202, Gly-293, Glu-324, and 350–353 (GGDS).

This sequence belongs to the phosphoglycerate kinase family. In terms of assembly, monomer.

The protein resides in the cytoplasm. It carries out the reaction (2R)-3-phosphoglycerate + ATP = (2R)-3-phospho-glyceroyl phosphate + ADP. It participates in carbohydrate degradation; glycolysis; pyruvate from D-glyceraldehyde 3-phosphate: step 2/5. This chain is Phosphoglycerate kinase, found in Borreliella burgdorferi (strain ZS7) (Borrelia burgdorferi).